The following is a 348-amino-acid chain: Selenide, water dikinase (348 aa).

Residue C17 is part of the active site. Residues K20 and 48-50 (TRD) each bind ATP. D51 is a Mg(2+) binding site. Residues D68, D91, and 139 to 141 (GHS) each bind ATP. D91 is a binding site for Mg(2+). D227 is a Mg(2+) binding site.

The protein belongs to the selenophosphate synthase 1 family. Class I subfamily. Homodimer. It depends on Mg(2+) as a cofactor.

The enzyme catalyses hydrogenselenide + ATP + H2O = selenophosphate + AMP + phosphate + 2 H(+). Synthesizes selenophosphate from selenide and ATP. This is Selenide, water dikinase from Yersinia pseudotuberculosis serotype I (strain IP32953).